A 387-amino-acid chain; its full sequence is Formate-dependent phosphoribosylglycinamide formyltransferase (387 aa).

Residues 12–13 (EL) and Glu-72 contribute to the N(1)-(5-phospho-beta-D-ribosyl)glycinamide site. Residues Arg-104, Lys-145, 150–155 (SSGKGQ), 185–188 (EEFI), and Glu-193 each bind ATP. The region spanning 109–300 (DLAAKDLKLL…EFELHLRAIL (192 aa)) is the ATP-grasp domain. Mg(2+) contacts are provided by Glu-258 and Glu-270. Residues Asp-277, Lys-348, and 355 to 356 (RR) contribute to the N(1)-(5-phospho-beta-D-ribosyl)glycinamide site.

This sequence belongs to the PurK/PurT family. As to quaternary structure, homodimer.

The catalysed reaction is N(1)-(5-phospho-beta-D-ribosyl)glycinamide + formate + ATP = N(2)-formyl-N(1)-(5-phospho-beta-D-ribosyl)glycinamide + ADP + phosphate + H(+). Its pathway is purine metabolism; IMP biosynthesis via de novo pathway; N(2)-formyl-N(1)-(5-phospho-D-ribosyl)glycinamide from N(1)-(5-phospho-D-ribosyl)glycinamide (formate route): step 1/1. Its function is as follows. Involved in the de novo purine biosynthesis. Catalyzes the transfer of formate to 5-phospho-ribosyl-glycinamide (GAR), producing 5-phospho-ribosyl-N-formylglycinamide (FGAR). Formate is provided by PurU via hydrolysis of 10-formyl-tetrahydrofolate. In Leptospira interrogans serogroup Icterohaemorrhagiae serovar copenhageni (strain Fiocruz L1-130), this protein is Formate-dependent phosphoribosylglycinamide formyltransferase.